A 104-amino-acid polypeptide reads, in one-letter code: uncharacterized protein (104 aa).

It belongs to the BolA/IbaG family.

This is an uncharacterized protein from Buchnera aphidicola subsp. Acyrthosiphon pisum (strain APS) (Acyrthosiphon pisum symbiotic bacterium).